A 417-amino-acid polypeptide reads, in one-letter code: NADH-quinone oxidoreductase subunit D (417 aa).

This sequence belongs to the complex I 49 kDa subunit family. NDH-1 is composed of 14 different subunits. Subunits NuoB, C, D, E, F, and G constitute the peripheral sector of the complex.

Its subcellular location is the cell inner membrane. The enzyme catalyses a quinone + NADH + 5 H(+)(in) = a quinol + NAD(+) + 4 H(+)(out). Functionally, NDH-1 shuttles electrons from NADH, via FMN and iron-sulfur (Fe-S) centers, to quinones in the respiratory chain. The immediate electron acceptor for the enzyme in this species is believed to be ubiquinone. Couples the redox reaction to proton translocation (for every two electrons transferred, four hydrogen ions are translocated across the cytoplasmic membrane), and thus conserves the redox energy in a proton gradient. The protein is NADH-quinone oxidoreductase subunit D of Burkholderia mallei (strain NCTC 10247).